We begin with the raw amino-acid sequence, 348 residues long: Spermatogenesis-associated protein 32 (348 aa).

The segment covering 27–36 has biased composition (basic and acidic residues); the sequence is YHHHHHPLED. Residues 27 to 61 form a disordered region; sequence YHHHHHPLEDNKDEDNEMGTELSSMKPPPKVDPDP. Serine 149 and serine 152 each carry phosphoserine. Residues 308–329 are disordered; it reads APATSPELQEDKDDSVPGTKKG. At threonine 330 the chain carries Phosphothreonine.

In terms of assembly, interacts with syntaxin-1 and ACTB. As to expression, abundantly expressed in testes. Expressed in germ cells, but not in Sertoli or Leydig cells of the adult testis. Localized at the acrosomal region of the round and elongated spermatids at stages VIII-X.

This Rattus norvegicus (Rat) protein is Spermatogenesis-associated protein 32 (Spata32).